Here is a 100-residue protein sequence, read N- to C-terminus: NADH-quinone oxidoreductase subunit K (100 aa).

Transmembrane regions (helical) follow at residues 4–24, 28–48, and 60–80; these read LTHG…GLVI, LLFM…AFVV, and VMYI…LALL.

The protein belongs to the complex I subunit 4L family. In terms of assembly, NDH-1 is composed of 13 different subunits. Subunits NuoA, H, J, K, L, M, N constitute the membrane sector of the complex.

It localises to the cell inner membrane. It carries out the reaction a quinone + NADH + 5 H(+)(in) = a quinol + NAD(+) + 4 H(+)(out). Functionally, NDH-1 shuttles electrons from NADH, via FMN and iron-sulfur (Fe-S) centers, to quinones in the respiratory chain. The immediate electron acceptor for the enzyme in this species is believed to be ubiquinone. Couples the redox reaction to proton translocation (for every two electrons transferred, four hydrogen ions are translocated across the cytoplasmic membrane), and thus conserves the redox energy in a proton gradient. The polypeptide is NADH-quinone oxidoreductase subunit K (Enterobacter sp. (strain 638)).